Reading from the N-terminus, the 442-residue chain is 5-methylthioadenosine/S-adenosylhomocysteine deaminase (442 aa).

His-70 and His-72 together coordinate Zn(2+). Substrate-binding residues include Glu-99 and His-191. His-218 contacts Zn(2+). The substrate site is built by Glu-221 and Asp-306. Asp-306 serves as a coordination point for Zn(2+).

Belongs to the metallo-dependent hydrolases superfamily. MTA/SAH deaminase family. The cofactor is Zn(2+).

It catalyses the reaction S-adenosyl-L-homocysteine + H2O + H(+) = S-inosyl-L-homocysteine + NH4(+). The catalysed reaction is S-methyl-5'-thioadenosine + H2O + H(+) = S-methyl-5'-thioinosine + NH4(+). In terms of biological role, catalyzes the deamination of 5-methylthioadenosine and S-adenosyl-L-homocysteine into 5-methylthioinosine and S-inosyl-L-homocysteine, respectively. Is also able to deaminate adenosine. This is 5-methylthioadenosine/S-adenosylhomocysteine deaminase from Nitratidesulfovibrio vulgaris (strain ATCC 29579 / DSM 644 / CCUG 34227 / NCIMB 8303 / VKM B-1760 / Hildenborough) (Desulfovibrio vulgaris).